The primary structure comprises 265 residues: Hydroxyethylthiazole kinase (265 aa).

Met36 provides a ligand contact to substrate. Residues Lys112 and Ser160 each coordinate ATP. Residue Gly187 coordinates substrate.

Belongs to the Thz kinase family. It depends on Mg(2+) as a cofactor.

The enzyme catalyses 5-(2-hydroxyethyl)-4-methylthiazole + ATP = 4-methyl-5-(2-phosphooxyethyl)-thiazole + ADP + H(+). The protein operates within cofactor biosynthesis; thiamine diphosphate biosynthesis; 4-methyl-5-(2-phosphoethyl)-thiazole from 5-(2-hydroxyethyl)-4-methylthiazole: step 1/1. Functionally, catalyzes the phosphorylation of the hydroxyl group of 4-methyl-5-beta-hydroxyethylthiazole (THZ). This Clostridium perfringens (strain 13 / Type A) protein is Hydroxyethylthiazole kinase.